Reading from the N-terminus, the 174-residue chain is Small ribosomal subunit protein uS4 (174 aa).

Residues 105-169 enclose the S4 RNA-binding domain; the sequence is RRLQTVAYRK…SPLADDLHPE (65 aa).

It belongs to the universal ribosomal protein uS4 family. As to quaternary structure, part of the 30S ribosomal subunit. Contacts protein S5. The interaction surface between S4 and S5 is involved in control of translational fidelity.

One of the primary rRNA binding proteins, it binds directly to 16S rRNA where it nucleates assembly of the body of the 30S subunit. Functionally, with S5 and S12 plays an important role in translational accuracy. The sequence is that of Small ribosomal subunit protein uS4 from Natronomonas pharaonis (strain ATCC 35678 / DSM 2160 / CIP 103997 / JCM 8858 / NBRC 14720 / NCIMB 2260 / Gabara) (Halobacterium pharaonis).